The following is a 388-amino-acid chain: NADPH-dependent butanol dehydrogenase (388 aa).

Belongs to the iron-containing alcohol dehydrogenase family.

Its function is as follows. This enzyme has activity using butanol and ethanol as substrates. This Clostridium saccharobutylicum protein is NADPH-dependent butanol dehydrogenase (adh1).